The following is a 228-amino-acid chain: Urease accessory protein UreF (228 aa).

Belongs to the UreF family. In terms of assembly, ureD, UreF and UreG form a complex that acts as a GTP-hydrolysis-dependent molecular chaperone, activating the urease apoprotein by helping to assemble the nickel containing metallocenter of UreC. The UreE protein probably delivers the nickel.

It localises to the cytoplasm. Its function is as follows. Required for maturation of urease via the functional incorporation of the urease nickel metallocenter. The polypeptide is Urease accessory protein UreF (Yersinia pestis bv. Antiqua (strain Antiqua)).